Reading from the N-terminus, the 182-residue chain is Crossover junction endodeoxyribonuclease RuvC (182 aa).

Active-site residues include Asp7, Glu68, and Asp141. Asp7, Glu68, and Asp141 together coordinate Mg(2+).

It belongs to the RuvC family. As to quaternary structure, homodimer which binds Holliday junction (HJ) DNA. The HJ becomes 2-fold symmetrical on binding to RuvC with unstacked arms; it has a different conformation from HJ DNA in complex with RuvA. In the full resolvosome a probable DNA-RuvA(4)-RuvB(12)-RuvC(2) complex forms which resolves the HJ. Mg(2+) serves as cofactor.

It localises to the cytoplasm. The catalysed reaction is Endonucleolytic cleavage at a junction such as a reciprocal single-stranded crossover between two homologous DNA duplexes (Holliday junction).. The RuvA-RuvB-RuvC complex processes Holliday junction (HJ) DNA during genetic recombination and DNA repair. Endonuclease that resolves HJ intermediates. Cleaves cruciform DNA by making single-stranded nicks across the HJ at symmetrical positions within the homologous arms, yielding a 5'-phosphate and a 3'-hydroxyl group; requires a central core of homology in the junction. The consensus cleavage sequence is 5'-(A/T)TT(C/G)-3'. Cleavage occurs on the 3'-side of the TT dinucleotide at the point of strand exchange. HJ branch migration catalyzed by RuvA-RuvB allows RuvC to scan DNA until it finds its consensus sequence, where it cleaves and resolves the cruciform DNA. This chain is Crossover junction endodeoxyribonuclease RuvC, found in Thermobifida fusca (strain YX).